Here is a 799-residue protein sequence, read N- to C-terminus: Ribonucleoside-diphosphate reductase large subunit (799 aa).

Substrate is bound by residues Thr192, Ser207–Cys208, Gly238, Asn408–Glu412, and Pro612–Thr616. An intrachain disulfide couples Cys208 to Cys424. Asn408 (proton acceptor) is an active-site residue. Cys410 (cysteine radical intermediate) is an active-site residue. Residue Glu412 is the Proton acceptor of the active site. The tract at residues Pro765–Gln799 is disordered. Basic and acidic residues predominate over residues Gly776–Asp793.

It belongs to the ribonucleoside diphosphate reductase large chain family. In terms of assembly, heterotetramer composed of a homodimer of the large subunit (R1) and a homodimer of the small subunit (R2). Larger multisubunit protein complex are also active, composed of (R1)n(R2)n.

It catalyses the reaction a 2'-deoxyribonucleoside 5'-diphosphate + [thioredoxin]-disulfide + H2O = a ribonucleoside 5'-diphosphate + [thioredoxin]-dithiol. Functionally, ribonucleoside-diphosphate reductase holoenzyme provides the precursors necessary for viral DNA synthesis. Allows virus growth in non-dividing cells, as well as reactivation from latency in infected hosts. Catalyzes the biosynthesis of deoxyribonucleotides from the corresponding ribonucleotides. This chain is Ribonucleoside-diphosphate reductase large subunit, found in Equine herpesvirus 2 (strain 86/87) (EHV-2).